Reading from the N-terminus, the 374-residue chain is C-X-C chemokine receptor type 5 (374 aa).

Residues 1-57 are Extracellular-facing; that stretch reads MNSPISLDMGAITYNMDDLYKELAIYSNSTEIPLQDSIFCSTEEGPLLTSFKTIFMP. Residue asparagine 28 is glycosylated (N-linked (GlcNAc...) asparagine). The helical transmembrane segment at 58–78 threads the bilayer; that stretch reads VAYSLIFLLGMMGNILVLVIL. The Cytoplasmic portion of the chain corresponds to 79-90; sequence ERHRHTRSSTET. Residues 91-111 form a helical membrane-spanning segment; that stretch reads FLFHLAVADLLLVFILPFAVA. Topologically, residues 112-126 are extracellular; sequence EGSVGWVLGTFLCKT. The cysteines at positions 124 and 204 are disulfide-linked. A helical transmembrane segment spans residues 127-147; sequence VIALHKINFYCSSLLLACIAV. Residues 148-169 are Cytoplasmic-facing; sequence DRYLAIVHAVHAYRRRRLLSIH. Residues 170–190 traverse the membrane as a helical segment; the sequence is ITCSTIWLAGFLFALPELLFA. At 191-221 the chain is on the extracellular side; it reads KVVQPHNNESLPQCIFSQENEAETRAWFASR. An N-linked (GlcNAc...) asparagine glycan is attached at asparagine 198. Residues 222 to 242 form a helical membrane-spanning segment; the sequence is FLYHTGGFLLPMLVMAWCYVG. The Cytoplasmic segment spans residues 243–261; it reads VVHRLLQAQRRPQRQKAVR. A helical transmembrane segment spans residues 262–282; sequence VAILVTSIFLLCWSPYHIVIF. At 283-306 the chain is on the extracellular side; that stretch reads LDTLERLKAVNSSCELSGYLSVAI. Residues 307-327 traverse the membrane as a helical segment; the sequence is TLCEFLGLAHCCLNPMLYTFA. Residues 328–374 are Cytoplasmic-facing; sequence GVKFRSDLSRLLTKLGCAGPASLCQLFPGWRKSSLSESENATSLTTF.

It belongs to the G-protein coupled receptor 1 family. In terms of tissue distribution, expressed in neuronal and lymphatic tissue.

The protein localises to the cell membrane. Functionally, cytokine receptor that binds to B-lymphocyte chemoattractant (BLC). Involved in B-cell migration into B-cell follicles of spleen and Peyer patches but not into those of mesenteric or peripheral lymph nodes. The protein is C-X-C chemokine receptor type 5 (Cxcr5) of Rattus norvegicus (Rat).